We begin with the raw amino-acid sequence, 472 residues long: Aspartyl/glutamyl-tRNA(Asn/Gln) amidotransferase subunit B (472 aa).

This sequence belongs to the GatB/GatE family. GatB subfamily. As to quaternary structure, heterotrimer of A, B and C subunits.

The catalysed reaction is L-glutamyl-tRNA(Gln) + L-glutamine + ATP + H2O = L-glutaminyl-tRNA(Gln) + L-glutamate + ADP + phosphate + H(+). The enzyme catalyses L-aspartyl-tRNA(Asn) + L-glutamine + ATP + H2O = L-asparaginyl-tRNA(Asn) + L-glutamate + ADP + phosphate + 2 H(+). In terms of biological role, allows the formation of correctly charged Asn-tRNA(Asn) or Gln-tRNA(Gln) through the transamidation of misacylated Asp-tRNA(Asn) or Glu-tRNA(Gln) in organisms which lack either or both of asparaginyl-tRNA or glutaminyl-tRNA synthetases. The reaction takes place in the presence of glutamine and ATP through an activated phospho-Asp-tRNA(Asn) or phospho-Glu-tRNA(Gln). The sequence is that of Aspartyl/glutamyl-tRNA(Asn/Gln) amidotransferase subunit B from Campylobacter jejuni subsp. jejuni serotype O:23/36 (strain 81-176).